We begin with the raw amino-acid sequence, 343 residues long: Heat-inducible transcription repressor HrcA (343 aa).

It belongs to the HrcA family.

Its function is as follows. Negative regulator of class I heat shock genes (grpE-dnaK-dnaJ and groELS operons). Prevents heat-shock induction of these operons. The chain is Heat-inducible transcription repressor HrcA from Thermoanaerobacter sp. (strain X514).